Here is a 115-residue protein sequence, read N- to C-terminus: Class I hydrophobin 21 (115 aa).

The first 20 residues, Met1–Ala20, serve as a signal peptide directing secretion. Intrachain disulfides connect Cys30–Cys93, Cys37–Cys87, Cys38–Cys77, and Cys94–Cys107.

This sequence belongs to the fungal hydrophobin family. In terms of assembly, self-assembles to form functional amyloid fibrils called rodlets. Self-assembly into fibrillar rodlets occurs spontaneously at hydrophobic:hydrophilic interfaces and the rodlets further associate laterally to form amphipathic monolayers.

The protein localises to the secreted. It is found in the cell wall. In terms of biological role, aerial growth, conidiation, and dispersal of filamentous fungi in the environment rely upon a capability of their secreting small amphipathic proteins called hydrophobins (HPBs) with low sequence identity. Class I can self-assemble into an outermost layer of rodlet bundles on aerial cell surfaces, conferring cellular hydrophobicity that supports fungal growth, development and dispersal; whereas Class II form highly ordered films at water-air interfaces through intermolecular interactions but contribute nothing to the rodlet structure. The sequence is that of Class I hydrophobin 21 from Pleurotus ostreatus (strain PC15) (Oyster mushroom).